The sequence spans 726 residues: uncharacterized protein (726 aa).

Residues serine 583 and histidine 698 each act as charge relay system in the active site.

It belongs to the peptidase S9B family.

This is an uncharacterized protein from Sinorhizobium fredii (strain NBRC 101917 / NGR234).